Consider the following 515-residue polypeptide: Forkhead box protein H1 (515 aa).

The segment at 55–103 is disordered; the sequence is YREGGTWSPDRGSMHGLSPGTQEGSCTQAEGTKDSLGGDETLSRKSKKK. Residues 73–84 are compositionally biased toward polar residues; that stretch reads PGTQEGSCTQAE. Positions 110–206 form a DNA-binding region, fork-head; it reads KPPYSYLAMI…MKLQNTALTR (97 aa). The segment at 307–399 is disordered; it reads YPQSKPTRNG…EPPKKMPLLS (93 aa). Over residues 322–339 the composition is skewed to low complexity; it reads SASHSTYSSSSSSISTIS. Residues 375–388 are compositionally biased toward polar residues; sequence STPSSDTDAGNYSP. Residues 377 to 503 are SMAD-interaction domain (SID); it reads PSSDTDAGNY…PSFLGQCLGS (127 aa). Residues 402–406 carry the Fast/FoxH1 motif 1 (FM1) motif; the sequence is LPTSY. The Fast/FoxH1 motif 2 (FM2) signature appears at 412–418; the sequence is PNVVAPP. An SMAD-interaction motif (SIM) motif is present at residues 467–488; that stretch reads LDNMLKTVPPNKSVFDVLTSHP.

As to quaternary structure, ARF1 contains 2 smad2s, 1 smad4 and 1 foxh1/fast-1 protein. Interaction with smad4 is most likely indirect through interaction with the MH2 domain of smad2. Binds to the MH2 domain of smad3, which can incorporate into the ARF1 complex. The ARF1 and ARF2 complexes are activated by distinct TGF-beta family members; formation of ARF1 is promoted by activin. Interacts (via Fork-head domain) with gtf2ird1/wbscr11 (via repeats 4-5).

It is found in the nucleus. Functionally, transcriptional activator. Recognizes and binds to the DNA sequence 5'-TGT[GT][GT]ATT-3'. Upon TGF-beta induction, forms a transcriptionally active complex with smad2 and smad4 called activin-responsive factor 1 (ARF1), which binds a site on the mix-B/mix.2 promoter called the activin response element (ARE). Binds to activated smads and the ARE with much lower affinity than fast3. Necessary for the first steps in mesoderm specification, directly inducing mesodermal genes. Acts with fast3 to control the convergent extension movements of gastrulation. Binds to the proximal element (PE) of the gsc gene and cooperates with gtf2ird1/wbscr11 and SMAD proteins to regulate gsc transcription. The protein is Forkhead box protein H1 of Xenopus tropicalis (Western clawed frog).